A 285-amino-acid chain; its full sequence is Glutamate racemase (285 aa).

Residues 28–29 and 60–61 contribute to the substrate site; these read DS and YG. The Proton donor/acceptor role is filled by C92. 93 to 94 contributes to the substrate binding site; that stretch reads NT. Residue C204 is the Proton donor/acceptor of the active site. Position 205–206 (205–206) interacts with substrate; it reads TH.

This sequence belongs to the aspartate/glutamate racemases family.

The catalysed reaction is L-glutamate = D-glutamate. The protein operates within cell wall biogenesis; peptidoglycan biosynthesis. Functionally, provides the (R)-glutamate required for cell wall biosynthesis. In Escherichia coli O6:H1 (strain CFT073 / ATCC 700928 / UPEC), this protein is Glutamate racemase.